The primary structure comprises 498 residues: ATP synthase subunit beta, chloroplastic (498 aa).

172–179 provides a ligand contact to ATP; sequence GGAGVGKT.

This sequence belongs to the ATPase alpha/beta chains family. In terms of assembly, F-type ATPases have 2 components, CF(1) - the catalytic core - and CF(0) - the membrane proton channel. CF(1) has five subunits: alpha(3), beta(3), gamma(1), delta(1), epsilon(1). CF(0) has four main subunits: a(1), b(1), b'(1) and c(9-12).

It is found in the plastid. The protein localises to the chloroplast thylakoid membrane. The enzyme catalyses ATP + H2O + 4 H(+)(in) = ADP + phosphate + 5 H(+)(out). Produces ATP from ADP in the presence of a proton gradient across the membrane. The catalytic sites are hosted primarily by the beta subunits. The protein is ATP synthase subunit beta, chloroplastic of Morus indica (Mulberry).